The sequence spans 992 residues: Meckelin (992 aa).

An N-terminal signal peptide occupies residues 1 to 36; the sequence is MVTRTRPVAAMAVRSRSSSRTGTAYLLLVLCEVSWA. The segment at 37 to 280 is cysteine-rich; it reads QIFSFPFRRP…FHYIFESTAG (244 aa). The Extracellular portion of the chain corresponds to 37–516; sequence QIFSFPFRRP…SVKYEMNQGD (480 aa). 12 cysteine pairs are disulfide-bonded: Cys49/Cys62, Cys65/Cys78, Cys80/Cys97, Cys100/Cys114, Cys117/Cys127, Cys129/Cys150, Cys153/Cys170, Cys173/Cys184, Cys186/Cys197, Cys237/Cys246, Cys253/Cys268, and Cys354/Cys375. Asn242 carries an N-linked (GlcNAc...) asparagine glycan. The chain crosses the membrane as a helical span at residues 517 to 545; it reads ASVHTDIALGVLGGLAVLSSLLKTAGWKR. Residues 546–555 are Cytoplasmic-facing; sequence RVGSPMIDLQ. A helical transmembrane segment spans residues 556–587; that stretch reads TVMKFLLYYAGDLANVFFIITVGTGLYWLIFF. Over 588–600 the chain is Extracellular; the sequence is KAQKSVSVLLPMP. Residues 601–628 form a helical membrane-spanning segment; sequence VQEERFVTYVGCAFAMKALQFLHKFISQ. The Cytoplasmic segment spans residues 629 to 667; it reads ISIDIFFIDWERPKGKVLKAVEGEGGVRSATVPVSIWRT. The helical intramembrane region spans 668 to 676; that stretch reads YFVANEWNE. The chain crosses the membrane as a discontinuously helical span at residues 668 to 698; that stretch reads YFVANEWNEIQTVRKINPLFQVLTTLFFLEV. An intramembrane segment occupies 677-685; that stretch reads IQTVRKINP. The segment at residues 686 to 698 is an intramembrane region (helical); the sequence is LFQVLTTLFFLEV. Topologically, residues 699 to 728 are extracellular; that stretch reads VGFKNLALMDSSSSLSRNPSDYTAPYSRIL. The helical intramembrane region spans 729 to 754; that stretch reads RYAVATAIWLVIGIIQVVFFAAFYER. Residues 729–768 form a discontinuously helical membrane-spanning segment; the sequence is RYAVATAIWLVIGIIQVVFFAAFYERFIEDKIRQFVDLCS. The stretch at 755 to 759 is an intramembrane region; sequence FIEDK. The helical intramembrane region spans 760–768; the sequence is IRQFVDLCS. Topologically, residues 769 to 923 are cytoplasmic; it reads MSNVSVFLLS…SIFYNDEGHS (155 aa). The helical intramembrane region spans 924 to 926; the sequence is FSS. Residues 924 to 949 form a discontinuously helical membrane-spanning segment; it reads FSSVLYYGNEATLLIFDLLFFCVVDL. An intramembrane segment occupies 927–933; sequence VLYYGNE. Residues 934–949 constitute an intramembrane region (helical); that stretch reads ATLLIFDLLFFCVVDL. Residues 950 to 954 are Extracellular-facing; it reads ACQDF. The helical transmembrane segment at 955–982 threads the bilayer; it reads VLASFLTYLQQEIFRFIRNTVGQKNLAT. Topologically, residues 983–992 are cytoplasmic; that stretch reads KTLVDERFLI.

Homodimer. Part of the tectonic-like complex (also named B9 complex). Interacts with DNAJB9, DNAJC10 and mutated SFTPC. Interacts with SYNE2 during the early establishment of cell polarity. Interacts (via C-terminus) with FLNA. Interacts with TMEM218. Interacts with WNT5A. Interacts with ROR2.

It is found in the cell membrane. It localises to the endoplasmic reticulum membrane. The protein localises to the cytoplasm. Its subcellular location is the cytoskeleton. The protein resides in the cilium basal body. Its function is as follows. Part of the tectonic-like complex which is required for tissue-specific ciliogenesis and may regulate ciliary membrane composition. Involved in centrosome migration to the apical cell surface during early ciliogenesis. Required for ciliary structure and function, including a role in regulating length and appropriate number through modulating centrosome duplication. Is a key regulator of stereociliary bundle orientation. Required for epithelial cell branching morphology. Essential for endoplasmic reticulum-associated degradation (ERAD) of surfactant protein C (sftpc). Involved in the negative regulation of canonical Wnt signaling, and activation of the non-canonical cascade stimulated by WNT5A. In non-canonical Wnt signaling, it may act as ROR2 coreceptor. This Mus musculus (Mouse) protein is Meckelin (Tmem67).